A 705-amino-acid chain; its full sequence is Ribosomal RNA large subunit methyltransferase K/L (705 aa).

The THUMP domain maps to 43–154 (LMYQSLMWSR…KDTASIALDL (112 aa)).

It belongs to the methyltransferase superfamily. RlmKL family.

It localises to the cytoplasm. The enzyme catalyses guanosine(2445) in 23S rRNA + S-adenosyl-L-methionine = N(2)-methylguanosine(2445) in 23S rRNA + S-adenosyl-L-homocysteine + H(+). It catalyses the reaction guanosine(2069) in 23S rRNA + S-adenosyl-L-methionine = N(2)-methylguanosine(2069) in 23S rRNA + S-adenosyl-L-homocysteine + H(+). Functionally, specifically methylates the guanine in position 2445 (m2G2445) and the guanine in position 2069 (m7G2069) of 23S rRNA. This is Ribosomal RNA large subunit methyltransferase K/L from Erwinia tasmaniensis (strain DSM 17950 / CFBP 7177 / CIP 109463 / NCPPB 4357 / Et1/99).